The sequence spans 267 residues: Tryptophan synthase alpha chain (267 aa).

Active-site proton acceptor residues include Glu-49 and Asp-60.

It belongs to the TrpA family. As to quaternary structure, tetramer of two alpha and two beta chains.

It carries out the reaction (1S,2R)-1-C-(indol-3-yl)glycerol 3-phosphate + L-serine = D-glyceraldehyde 3-phosphate + L-tryptophan + H2O. It functions in the pathway amino-acid biosynthesis; L-tryptophan biosynthesis; L-tryptophan from chorismate: step 5/5. The alpha subunit is responsible for the aldol cleavage of indoleglycerol phosphate to indole and glyceraldehyde 3-phosphate. The polypeptide is Tryptophan synthase alpha chain (Acinetobacter baumannii (strain AB307-0294)).